A 192-amino-acid polypeptide reads, in one-letter code: MEKYVVLILSYILGSIPFSLIITRIKGINLREVGSGNIGATNVARTGNKFLAALALFLDSFKGFIAVYIAQQFCDNNDFYIYVSAILAVLGHMFPIWLKFSGGKGVATTLGILIAFNIDITLVFVIIWIIVFLAFRYSSLASLSATSTAVAWSFFFQRNLFLTLLIIGALVFLKHHRNIVNLLQGKEYKFYR.

5 consecutive transmembrane segments (helical) span residues 5–25 (VVLI…ITRI), 50–70 (FLAA…VYIA), 78–98 (DFYI…PIWL), 112–132 (ILIA…IIVF), and 153–173 (SFFF…LVFL).

This sequence belongs to the PlsY family. As to quaternary structure, probably interacts with PlsX.

The protein localises to the cell membrane. It carries out the reaction an acyl phosphate + sn-glycerol 3-phosphate = a 1-acyl-sn-glycero-3-phosphate + phosphate. It functions in the pathway lipid metabolism; phospholipid metabolism. Functionally, catalyzes the transfer of an acyl group from acyl-phosphate (acyl-PO(4)) to glycerol-3-phosphate (G3P) to form lysophosphatidic acid (LPA). This enzyme utilizes acyl-phosphate as fatty acyl donor, but not acyl-CoA or acyl-ACP. The polypeptide is Glycerol-3-phosphate acyltransferase (Wolbachia pipientis wMel).